The primary structure comprises 720 residues: Methionine--tRNA ligase (720 aa).

Positions 27–37 (PYANGQIHIGH) match the 'HIGH' region motif. The Zn(2+) site is built by cysteine 158, cysteine 161, cysteine 171, and cysteine 174. The 'KMSKS' region signature appears at 348-352 (KMSKS). Residue lysine 351 coordinates ATP. The tRNA-binding domain maps to 614-720 (DFAKIDLRIA…SGAKPGMRVK (107 aa)).

Belongs to the class-I aminoacyl-tRNA synthetase family. MetG type 1 subfamily. Homodimer. The cofactor is Zn(2+).

It is found in the cytoplasm. The enzyme catalyses tRNA(Met) + L-methionine + ATP = L-methionyl-tRNA(Met) + AMP + diphosphate. Is required not only for elongation of protein synthesis but also for the initiation of all mRNA translation through initiator tRNA(fMet) aminoacylation. This Burkholderia lata (strain ATCC 17760 / DSM 23089 / LMG 22485 / NCIMB 9086 / R18194 / 383) protein is Methionine--tRNA ligase.